Here is a 517-residue protein sequence, read N- to C-terminus: Ubiquitin carboxyl-terminal hydrolase 30 (517 aa).

Residues 1-35 are Mitochondrial intermembrane-facing; that stretch reads MLSSRAEAAMTAADRAIQRFLRTGAAVRYKVMKNW. The helical transmembrane segment at 36–56 threads the bilayer; that stretch reads GVIGGIAAALAAGIYVIWGPI. Residues 57-517 lie on the Cytoplasmic side of the membrane; that stretch reads TERKKRRKGL…HQSQECKSEE (461 aa). The USP domain occupies 68–502; it reads PGLVNLGNTC…SAYLLFYERV (435 aa). Catalysis depends on Cys77, which acts as the Nucleophile. Residues Lys235 and Lys289 each participate in a glycyl lysine isopeptide (Lys-Gly) (interchain with G-Cter in ubiquitin) cross-link. A disordered region spans residues 364 to 395; that stretch reads SQHNPKLNKNPGPTLELQDGPGAPTPVLNQPG. His452 functions as the Proton acceptor in the catalytic mechanism.

This sequence belongs to the peptidase C19 family. Post-translationally, ubiquitinated by parkin (PRKN) at Lys-235 and Lys-289, leading to its degradation. As to expression, expressed in skeletal muscle, pancreas, liver and kidney.

Its subcellular location is the mitochondrion outer membrane. It carries out the reaction Thiol-dependent hydrolysis of ester, thioester, amide, peptide and isopeptide bonds formed by the C-terminal Gly of ubiquitin (a 76-residue protein attached to proteins as an intracellular targeting signal).. Its activity is regulated as follows. Inhibited by the diterpenoid derivative 15-oxospiramilactone (S3). Deubiquitinating enzyme tethered to the mitochondrial outer membrane that acts as a key inhibitor of mitophagy by counteracting the action of parkin (PRKN): hydrolyzes ubiquitin attached by parkin on target proteins, such as RHOT1/MIRO1 and TOMM20, thereby blocking parkin's ability to drive mitophagy. Preferentially cleaves 'Lys-6'- and 'Lys-11'-linked polyubiquitin chains, 2 types of linkage that participate in mitophagic signaling. Does not cleave efficiently polyubiquitin phosphorylated at 'Ser-65'. Acts as a negative regulator of mitochondrial fusion by mediating deubiquitination of MFN1 and MFN2. This chain is Ubiquitin carboxyl-terminal hydrolase 30, found in Homo sapiens (Human).